Here is a 145-residue protein sequence, read N- to C-terminus: Large ribosomal subunit protein uL13 (145 aa).

Belongs to the universal ribosomal protein uL13 family. As to quaternary structure, part of the 50S ribosomal subunit. Interacts weakly with proteins L3 and L6.

Functionally, this protein is one of the early assembly proteins of the 50S ribosomal subunit. Binds to 23S rRNA. This is Large ribosomal subunit protein uL13 from Haloarcula marismortui (strain ATCC 43049 / DSM 3752 / JCM 8966 / VKM B-1809) (Halobacterium marismortui).